Consider the following 111-residue polypeptide: MAKDIGLNVKAPKTECNDPQCPFHGSLAVRGQIFEGTVVSAKMSKSVVVSREYLKRDLKYDRYEKRRSKLHAHNPPCINAKEGDKVVIAECRPLSKTKTFVVVEVAGHESN.

This sequence belongs to the universal ribosomal protein uS17 family. In terms of assembly, part of the 30S ribosomal subunit.

One of the primary rRNA binding proteins, it binds specifically to the 5'-end of 16S ribosomal RNA. In Methanocella arvoryzae (strain DSM 22066 / NBRC 105507 / MRE50), this protein is Small ribosomal subunit protein uS17.